We begin with the raw amino-acid sequence, 314 residues long: Methionyl-tRNA formyltransferase (314 aa).

Residue 113-116 (SLLP) coordinates (6S)-5,6,7,8-tetrahydrofolate.

This sequence belongs to the Fmt family.

The enzyme catalyses L-methionyl-tRNA(fMet) + (6R)-10-formyltetrahydrofolate = N-formyl-L-methionyl-tRNA(fMet) + (6S)-5,6,7,8-tetrahydrofolate + H(+). In terms of biological role, attaches a formyl group to the free amino group of methionyl-tRNA(fMet). The formyl group appears to play a dual role in the initiator identity of N-formylmethionyl-tRNA by promoting its recognition by IF2 and preventing the misappropriation of this tRNA by the elongation apparatus. In Stutzerimonas stutzeri (strain A1501) (Pseudomonas stutzeri), this protein is Methionyl-tRNA formyltransferase.